The sequence spans 322 residues: Sideroflexin-1 (322 aa).

Ser2 bears the N-acetylserine mark. Topologically, residues 2-102 (SGEVPPNINI…MSAQVPMNMT (101 aa)) are mitochondrial matrix. A helical membrane pass occupies residues 103–120 (ITGCMMTFYRTTPAVLFW). Over 121–146 (QWINQSFNAVVNYTNRSGDAPLTVNE) the chain is Mitochondrial intermembrane. A helical membrane pass occupies residues 147–167 (LGTAYVSATTGAVATALGLNA). The Mitochondrial matrix segment spans residues 168 to 174 (LTKHVSP). Residues 175 to 195 (LIGRFVPFAAVAAANCINIPL) form a helical membrane-spanning segment. Over 196–228 (MRQRELKVGIPVTDENGTRLGESTNAAKQAITQ) the chain is Mitochondrial intermembrane. The helical transmembrane segment at 229–249 (VVISRILMAAPGMAIPPFIMN) threads the bilayer. Topologically, residues 250-266 (TLEKKAFLKRFPWMSAP) are mitochondrial matrix. A helical membrane pass occupies residues 267-287 (IQVTLVGFCLVFATPLCCALF). The Mitochondrial intermembrane segment spans residues 288–322 (PQKSSMSVTSLEDDLQASIQKSHPELRRVYFNKGL).

Belongs to the sideroflexin family.

The protein localises to the mitochondrion inner membrane. The enzyme catalyses L-serine(in) = L-serine(out). The catalysed reaction is L-alanine(in) = L-alanine(out). It carries out the reaction L-cysteine(in) = L-cysteine(out). Functionally, amino acid transporter importing serine, an essential substrate of the mitochondrial branch of the one-carbon pathway, into mitochondria. Mitochondrial serine is then converted to glycine and formate, which exits to the cytosol where it is used to generate the charged folates that serve as one-carbon donors. May also transport other amino acids including alanine and cysteine. The polypeptide is Sideroflexin-1 (Sfxn1) (Rattus norvegicus (Rat)).